The following is a 212-amino-acid chain: Large ribosomal subunit protein bL25 (212 aa).

The tract at residues 190 to 212 is disordered; sequence IAEAGDALAEPEVISKGSGEADE.

This sequence belongs to the bacterial ribosomal protein bL25 family. CTC subfamily. Part of the 50S ribosomal subunit; part of the 5S rRNA/L5/L18/L25 subcomplex. Contacts the 5S rRNA. Binds to the 5S rRNA independently of L5 and L18.

Its function is as follows. This is one of the proteins that binds to the 5S RNA in the ribosome where it forms part of the central protuberance. In Rhodopirellula baltica (strain DSM 10527 / NCIMB 13988 / SH1), this protein is Large ribosomal subunit protein bL25.